The following is a 690-amino-acid chain: MNIDNELSKCRNIGIMAHIDAGKTTTTERILFYTGKQNRIGEVHEGAASMDWMEQEKERGITITSAATTCFWNGHRINIIDTPGHVDFTIEVERSLRVLDGAVAVFDGVAGVEPQSETVWRQADKYNVPRICFMNKMDRMGADFYRCVDMLVDRLGATPLVLQLPIGSEKDFVGVVDLLEMRSIIWDEDSLGASFHYGEIPKDMIDKAQEYRNKLLESAVELNDEAMNLYFEGKEISVSLLKSCIRTGVIQSKFVPVLCGSAFKNRGVQPLLDAVVDFLPAPNDIPVIEALDVKTSNTINVKTSAGGKFVALAFKVMTDKFVGSLTFIRIYSGKLSSKTTVLNAVKDSTESIGRILLMHANNREDITEAQAGDIVALAGLKKTVTGDTLCALDYPVILERMEFPEPVMEIAVEPKSTADQEKMGIALSRLVAEDPSLGMYVNPESGQTILKGMGELHLEVIVDRMRREFNVEANIGAPQVAYRETITKSVEIEYIHKKQTGGAGQFAKVNILFEPLPPGSGFQFESKITGGAIPKEYIPGVQSGLENIRGSGMLAGFPVIDFKATLFDGAFHEVDSSPLAFELAAKGAFRDMVNKAGAILLEPIMKVEIITPDEYMGDVIGDINSRRGRVAEMQDRHNTKVILAFIPLAKMFGYVKDLRSMSQGRAQYSMYFSCYEQVPDNIVANEIKTK.

The tr-type G domain maps to 8-283 (SKCRNIGIMA…AVVDFLPAPN (276 aa)). GTP is bound by residues 17-24 (AHIDAGKT), 81-85 (DTPGH), and 135-138 (NKMD).

The protein belongs to the TRAFAC class translation factor GTPase superfamily. Classic translation factor GTPase family. EF-G/EF-2 subfamily.

The protein localises to the cytoplasm. Catalyzes the GTP-dependent ribosomal translocation step during translation elongation. During this step, the ribosome changes from the pre-translocational (PRE) to the post-translocational (POST) state as the newly formed A-site-bound peptidyl-tRNA and P-site-bound deacylated tRNA move to the P and E sites, respectively. Catalyzes the coordinated movement of the two tRNA molecules, the mRNA and conformational changes in the ribosome. This is Elongation factor G from Ehrlichia canis (strain Jake).